An 89-amino-acid polypeptide reads, in one-letter code: MALTQERKNEIIAQFRTHETDTGSPEVQIAVLTEQINTLNEHLRTHKKDHHSRRGLLKMVGKRRNLLTYLRNSDITRYRELITKLGLRR.

It belongs to the universal ribosomal protein uS15 family. As to quaternary structure, part of the 30S ribosomal subunit. Forms a bridge to the 50S subunit in the 70S ribosome, contacting the 23S rRNA.

One of the primary rRNA binding proteins, it binds directly to 16S rRNA where it helps nucleate assembly of the platform of the 30S subunit by binding and bridging several RNA helices of the 16S rRNA. Functionally, forms an intersubunit bridge (bridge B4) with the 23S rRNA of the 50S subunit in the ribosome. The protein is Small ribosomal subunit protein uS15 of Bacillus anthracis (strain CDC 684 / NRRL 3495).